The sequence spans 796 residues: Serine/threonine-protein kinase ATG1 (796 aa).

The Protein kinase domain maps to 9-304 (YVVGAEIGRG…FQEFFNDPVI (296 aa)). Residues 15 to 23 (IGRGSFANV) and lysine 38 contribute to the ATP site. Aspartate 155 functions as the Proton acceptor in the catalytic mechanism. Residues 360–370 (LEEEDEEEDQD) show a composition bias toward acidic residues. Disordered regions lie at residues 360–382 (LEEE…IQHM), 389–408 (LLNK…RREL), and 450–480 (PYTR…KVPI). Over residues 389–403 (LLNKTTQKQTEVQSQ) the composition is skewed to polar residues. Residues 453 to 470 (RRYSSSSRSSSTGSNQRR) show a composition bias toward low complexity.

This sequence belongs to the protein kinase superfamily. Ser/Thr protein kinase family. APG1/unc-51/ULK1 subfamily. As to quaternary structure, homodimer. Forms a ternary complex with ATG13 and ATG17.

It is found in the cytoplasm. It localises to the preautophagosomal structure membrane. The enzyme catalyses L-seryl-[protein] + ATP = O-phospho-L-seryl-[protein] + ADP + H(+). It catalyses the reaction L-threonyl-[protein] + ATP = O-phospho-L-threonyl-[protein] + ADP + H(+). In terms of biological role, serine/threonine protein kinase involved in the cytoplasm to vacuole transport (Cvt) and found to be essential in autophagy, where it is required for the formation of autophagosomes. Involved in the clearance of protein aggregates which cannot be efficiently cleared by the proteasome. Required for selective autophagic degradation of the nucleus (nucleophagy) as well as for mitophagy which contributes to regulate mitochondrial quantity and quality by eliminating the mitochondria to a basal level to fulfill cellular energy requirements and preventing excess ROS production. Also involved in endoplasmic reticulum-specific autophagic process, in selective removal of ER-associated degradation (ERAD) substrates. Plays a key role in ATG9 and ATG23 cycling through the pre-autophagosomal structure and is necessary to promote ATG18 binding to ATG9 through phosphorylation of ATG9. Catalyzes phosphorylation of ATG4, decreasing the interaction between ATG4 and ATG8 and impairing deconjugation of PE-conjugated forms of ATG8. The sequence is that of Serine/threonine-protein kinase ATG1 from Komagataella pastoris (Yeast).